A 365-amino-acid polypeptide reads, in one-letter code: Adenosine deaminase (365 aa).

Zn(2+) is bound by residues H19 and H21. Residues H21, D23, and G181 each coordinate substrate. Position 208 (H208) interacts with Zn(2+). The active-site Proton donor is the E211. Residue D300 participates in Zn(2+) binding.

The protein belongs to the metallo-dependent hydrolases superfamily. Adenosine and AMP deaminases family. Adenosine deaminase subfamily. Zn(2+) serves as cofactor.

It catalyses the reaction adenosine + H2O + H(+) = inosine + NH4(+). The enzyme catalyses 2'-deoxyadenosine + H2O + H(+) = 2'-deoxyinosine + NH4(+). Its function is as follows. Catalyzes the hydrolytic deamination of adenosine and 2-deoxyadenosine. This chain is Adenosine deaminase, found in Mycobacterium tuberculosis (strain ATCC 25177 / H37Ra).